A 151-amino-acid polypeptide reads, in one-letter code: Meiotically up-regulated gene 114 protein (151 aa).

The protein resides in the cytoplasm. In terms of biological role, has a role in meiosis. The protein is Meiotically up-regulated gene 114 protein (mug114) of Schizosaccharomyces pombe (strain 972 / ATCC 24843) (Fission yeast).